We begin with the raw amino-acid sequence, 309 residues long: Interferon-inducible double-stranded RNA-dependent protein kinase activator A homolog A (309 aa).

Positions 1-22 are disordered; the sequence is MSQERFPAAPKMSSEKPTSLDA. 3 consecutive DRBM domains span residues 31–98, 123–191, and 236–304; these read TPIQ…ILRG, NPVG…KFKT, and DYVK…YLKI.

Belongs to the PRKRA family. As to quaternary structure, homodimer. Interacts with dicer1 and eif2ak2/pkr. Also able to interact with dsRNA.

Its subcellular location is the cytoplasm. The protein resides in the perinuclear region. It is found in the nucleus. In terms of biological role, activates eif2ak2/pkr in the absence of double-stranded RNA (dsRNA), leading to phosphorylation of eif2s1/efi2-alpha and inhibition of translation and induction of apoptosis. Required for siRNA production by dicer1 and for subsequent siRNA-mediated post-transcriptional gene silencing. Does not seem to be required for processing of pre-miRNA to miRNA by dicer1. In Xenopus laevis (African clawed frog), this protein is Interferon-inducible double-stranded RNA-dependent protein kinase activator A homolog A (prkra-a).